Reading from the N-terminus, the 617-residue chain is pH-sensitive chloride channel 2 (617 aa).

Positions 1 to 28 (MHSPGAAAYVFLQCLVALVAAVIAQSGA) are cleaved as a signal peptide. Residues 29 to 387 (DQPPTTVVEV…VHLAREMGFY (359 aa)) are Extracellular-facing. The N-linked (GlcNAc...) asparagine glycan is linked to Asn-57. A compositionally biased stretch (low complexity) spans 82 to 96 (TVSVDSSSTTTVAST). A disordered region spans residues 82–110 (TVSVDSSSTTTVASTQEPTSTTERTMSPE). Polar residues predominate over residues 97–106 (QEPTSTTERT). N-linked (GlcNAc...) asparagine glycosylation occurs at Asn-130. A compositionally biased stretch (basic and acidic residues) spans 131-147 (ATDDNRPDAKSSGKDSE). The interval 131–155 (ATDDNRPDAKSSGKDSECPTLEGAD) is disordered. Asn-184, Asn-234, Asn-351, and Asn-370 each carry an N-linked (GlcNAc...) asparagine glycan. A helical transmembrane segment spans residues 388 to 408 (MMDYFIPSIMLVAISWVTFWL). Over 409–414 (QADQSA) the chain is Cytoplasmic. The helical transmembrane segment at 415–434 (PRITLGTSTMLTFITLASAQ) threads the bilayer. Residues 435-447 (GKTLPKVSYIKAS) are Extracellular-facing. A helical transmembrane segment spans residues 448–468 (EIWFLGCTGFIFGSLVEFAFV). Topologically, residues 469-596 (NTIWRRKRNV…VAIWIDKRSR (128 aa)) are cytoplasmic. Residues 597–617 (FVFPIAFVIFNIFYWTFVYYV) form a helical membrane-spanning segment.

This sequence belongs to the ligand-gated ion channel (TC 1.A.9) family.

The protein localises to the cell membrane. The catalysed reaction is chloride(in) = chloride(out). In terms of biological role, ligand and pH-gated channel that mediates chloride transport in the mid-gut and thereby may function in larval metabolism and fluid homeostasis. Channel opening is triggered by zinc binding or, to a lesser extent, an increase in extracellular pH. The chain is pH-sensitive chloride channel 2 from Anopheles gambiae (African malaria mosquito).